A 93-amino-acid chain; its full sequence is Large ribosomal subunit protein bL31B (93 aa).

It belongs to the bacterial ribosomal protein bL31 family. Type B subfamily. Part of the 50S ribosomal subunit.

This Pseudomonas syringae pv. syringae (strain B728a) protein is Large ribosomal subunit protein bL31B.